The chain runs to 759 residues: Subtilisin-like protease SBT3.16 (759 aa).

Positions 1–33 are cleaved as a signal peptide; the sequence is MELSSLIVPNNKKHFVVVFIGLVLIFKIALITA. Positions 34-119 are cleaved as a propeptide — activation peptide; sequence ANEKSQIYTV…VTRSKNMKLK (86 aa). An Inhibitor I9 domain is found at 41-118; it reads YTVHLGERQH…RVTRSKNMKL (78 aa). One can recognise a Peptidase S8 domain in the interval 124-608; it reads SDYLGLTSAA…GGLVNPVKVA (485 aa). Aspartate 153 (charge relay system) is an active-site residue. 2 N-linked (GlcNAc...) asparagine glycosylation sites follow: asparagine 186 and asparagine 209. Histidine 229 (charge relay system) is an active-site residue. Asparagine 371 carries N-linked (GlcNAc...) asparagine glycosylation. Catalysis depends on serine 539, which acts as the Charge relay system. 2 N-linked (GlcNAc...) asparagine glycosylation sites follow: asparagine 632 and asparagine 711.

This sequence belongs to the peptidase S8 family.

The protein localises to the secreted. In Arabidopsis thaliana (Mouse-ear cress), this protein is Subtilisin-like protease SBT3.16.